The sequence spans 503 residues: Maturase K (503 aa).

Belongs to the intron maturase 2 family. MatK subfamily.

It localises to the plastid. The protein resides in the chloroplast. In terms of biological role, usually encoded in the trnK tRNA gene intron. Probably assists in splicing its own and other chloroplast group II introns. The chain is Maturase K from Diospyros kaki (Kaki persimmon).